A 348-amino-acid chain; its full sequence is MFSNKPVIGVVFGGKSSEHEVSIKSAKTIYNALSHLSNKERYVARPVYIDKYGYWHDYIFSESILYDKKDHLIFEDRRVNLTNLSNMEDIDVWFPCLHGPNGEDGVIQGLFKSTGKPFVGSGVLGSALGMDKIAMKSVFKSYNLPQVPYVSLNKADIQNNLYMKSIYEQINKIINYPCFIKPANLGSSVGITKAYSKEEFITGIEFAAKYDERIIVEKSIEGRELECGVLGKSIMKSSVVGEVKFQTDWYTYESKYNANLSSTIIPADLNIEISNKIQKLAIEACKAINAYGLARVDFFYQESTQQIYINEVNTLPGFTKTSMYPTLWEASGLKLEKLVASLIEIAKE.

One can recognise an ATP-grasp domain in the interval 136–344 (KSVFKSYNLP…LEKLVASLIE (209 aa)). 171–226 (NKIINYPCFIKPANLGSSVGITKAYSKEEFITGIEFAAKYDERIIVEKSIEGRELE) is an ATP binding site. Residues aspartate 297, glutamate 311, and asparagine 313 each coordinate Mg(2+).

The protein belongs to the D-alanine--D-alanine ligase family. Mg(2+) serves as cofactor. The cofactor is Mn(2+).

The protein resides in the cytoplasm. It catalyses the reaction 2 D-alanine + ATP = D-alanyl-D-alanine + ADP + phosphate + H(+). It participates in cell wall biogenesis; peptidoglycan biosynthesis. Functionally, cell wall formation. In Prochlorococcus marinus (strain NATL1A), this protein is D-alanine--D-alanine ligase.